A 216-amino-acid chain; its full sequence is Germin-like protein 1-1 (216 aa).

Positions 1-24 are cleaved as a signal peptide; it reads MARVQLWVAAACAVVLALAAPSLA. Cysteine 34 and cysteine 49 are oxidised to a cystine. N-linked (GlcNAc...) asparagine glycosylation is found at asparagine 52 and asparagine 76. The 149-residue stretch at 61 to 209 folds into the Cupin type-1 domain; sequence AGLKNPGNTN…AFRVDVPQVD (149 aa). Residues histidine 109, histidine 111, glutamate 116, and histidine 155 each contribute to the Mn(2+) site.

This sequence belongs to the germin family. In terms of assembly, oligomer (believed to be a pentamer but probably hexamer).

It localises to the secreted. The protein resides in the extracellular space. The protein localises to the apoplast. Its function is as follows. May play a role in plant defense. Probably has no oxalate oxidase activity even if the active site is conserved. This chain is Germin-like protein 1-1 (GER4), found in Oryza sativa subsp. japonica (Rice).